A 198-amino-acid polypeptide reads, in one-letter code: MNLLILFFGYLFGSFPSGYLAGRIAKGIDIRSLGSGSTGATNVLRHIGKRAAITVFLLDVFKGVLSILLAKYLLLNDSWQVAVGLSTLIGHIWPVWLNWKGGKAVATGLGIFLGLSWQVGLATLGVFIIMITLFRIVSLASVSASLALPLIMFLSFSGSNLSLPFLIVSLLAMILVIWRHRENIVRLIRGKEPRIGQP.

Helical transmembrane passes span 1–21, 55–75, 79–99, 111–131, 136–156, and 158–178; these read MNLL…GYLA, VFLL…YLLL, WQVA…WLNW, IFLG…IIMI, IVSL…FLSF, and GSNL…LVIW.

The protein belongs to the PlsY family. In terms of assembly, probably interacts with PlsX.

The protein resides in the cell inner membrane. It catalyses the reaction an acyl phosphate + sn-glycerol 3-phosphate = a 1-acyl-sn-glycero-3-phosphate + phosphate. Its pathway is lipid metabolism; phospholipid metabolism. Its function is as follows. Catalyzes the transfer of an acyl group from acyl-phosphate (acyl-PO(4)) to glycerol-3-phosphate (G3P) to form lysophosphatidic acid (LPA). This enzyme utilizes acyl-phosphate as fatty acyl donor, but not acyl-CoA or acyl-ACP. This is Glycerol-3-phosphate acyltransferase from Prochlorococcus marinus (strain NATL2A).